The chain runs to 337 residues: Follistatin (337 aa).

The first 22 residues, 1-22, serve as a signal peptide directing secretion; sequence PGGVCLLLLLLCQFMEDRSAQA. One can recognise a TB domain in the interval 23 to 96; it reads GNCWLRQAKN…TCENVDCGPG (74 aa). Cystine bridges form between cysteine 25–cysteine 48, cysteine 35–cysteine 81, cysteine 49–cysteine 84, cysteine 88–cysteine 99, cysteine 93–cysteine 109, cysteine 111–cysteine 143, cysteine 115–cysteine 136, cysteine 125–cysteine 157, cysteine 161–cysteine 172, cysteine 166–cysteine 182, cysteine 185–cysteine 218, cysteine 189–cysteine 211, cysteine 200–cysteine 232, cysteine 238–cysteine 249, cysteine 243–cysteine 260, cysteine 263–cysteine 295, cysteine 267–cysteine 288, and cysteine 277–cysteine 309. Residues 87–110 form the Follistatin-like 1 domain; that stretch reads TCENVDCGPGKKCRMNKKNKPRCV. Residues 105 to 159 enclose the Kazal-like 1 domain; it reads NKPRCVCAPDCSNITWKGPVCGLDGKTYRNECALLKARCKEQPELEVQYQGKCKK. A glycan (N-linked (GlcNAc...) asparagine) is linked at asparagine 117. Residues 160–183 form the Follistatin-like 2 domain; that stretch reads TCRDVFCPGSSTCVVDQTNNAYCV. In terms of domain architecture, Kazal-like 2 spans 179 to 234; sequence NAYCVTCNRICPEPTSSEQYLCGNDGVTYPSACHLRKATCLLGRSIGLAYEGKCIK. In terms of domain architecture, Follistatin-like 3 spans 237–261; that stretch reads SCEDIQCTGGKKCLWDFKVGRGRCS. Positions 254 to 311 constitute a Kazal-like 3 domain; it reads KVGRGRCSLCGELCPESKSEEPVCASDNATYASECAMKEAACSSGVLLEVKHSGSCNS. Residue asparagine 281 is glycosylated (N-linked (GlcNAc...) asparagine). The segment at 309-337 is disordered; it reads CNSISEDTEDEEEDEDQDYSFPISSILEW. The segment covering 314 to 326 has biased composition (acidic residues); it reads EDTEDEEEDEDQD.

Monomer.

The protein localises to the secreted. In terms of biological role, binds directly to activin and functions as an activin antagonist. Specific inhibitor of the biosynthesis and secretion of pituitary follicle stimulating hormone (FSH). The protein is Follistatin of Ovis aries (Sheep).